The chain runs to 100 residues: Small ribosomal subunit protein uS14c (100 aa).

The tract at residues 1-31 (MARKSLIQREKKRQKLEQKYHSIRRSSKKEI) is disordered.

This sequence belongs to the universal ribosomal protein uS14 family. As to quaternary structure, part of the 30S ribosomal subunit.

Its subcellular location is the plastid. It is found in the chloroplast. Functionally, binds 16S rRNA, required for the assembly of 30S particles. This Solanum bulbocastanum (Wild potato) protein is Small ribosomal subunit protein uS14c.